Consider the following 86-residue polypeptide: Large ribosomal subunit protein bL27 (86 aa).

Belongs to the bacterial ribosomal protein bL27 family.

The chain is Large ribosomal subunit protein bL27 from Xanthomonas campestris pv. campestris (strain 8004).